Consider the following 280-residue polypeptide: Formamidopyrimidine-DNA glycosylase (280 aa).

P2 (schiff-base intermediate with DNA) is an active-site residue. E3 (proton donor) is an active-site residue. K59 (proton donor; for beta-elimination activity) is an active-site residue. Residues H92 and R111 each coordinate DNA. The FPG-type zinc finger occupies 239–273 (NVYGQTGLPCNRCGTPIVKTKVAQRGTHYCPQCQQ). The Proton donor; for delta-elimination activity role is filled by R263.

Belongs to the FPG family. Monomer. Zn(2+) serves as cofactor.

It catalyses the reaction Hydrolysis of DNA containing ring-opened 7-methylguanine residues, releasing 2,6-diamino-4-hydroxy-5-(N-methyl)formamidopyrimidine.. The enzyme catalyses 2'-deoxyribonucleotide-(2'-deoxyribose 5'-phosphate)-2'-deoxyribonucleotide-DNA = a 3'-end 2'-deoxyribonucleotide-(2,3-dehydro-2,3-deoxyribose 5'-phosphate)-DNA + a 5'-end 5'-phospho-2'-deoxyribonucleoside-DNA + H(+). Functionally, involved in base excision repair of DNA damaged by oxidation or by mutagenic agents. Acts as a DNA glycosylase that recognizes and removes damaged bases. Has a preference for oxidized purines, such as 7,8-dihydro-8-oxoguanine (8-oxoG). Has AP (apurinic/apyrimidinic) lyase activity and introduces nicks in the DNA strand. Cleaves the DNA backbone by beta-delta elimination to generate a single-strand break at the site of the removed base with both 3'- and 5'-phosphates. The polypeptide is Formamidopyrimidine-DNA glycosylase (Enterococcus faecalis (strain ATCC 700802 / V583)).